The chain runs to 349 residues: MPVERMRMRPWLEEQINSNTIPGLKWLNKEKKIFQIPWMHAARHGWDVEKDAPLFRNWAIHTGKHQPGVDKPDPKTWKANFRCAMNSLPDIEEVKDKSIKKGNNAFRVYRMLPLSERPSKKGKKPKTEKEDKVKHIKQEPVESSLGLSNGVSDLSPEYAVLTSTIKNEVDSTVNIIVVGQSHLDSNIENQEIVTNPPDICQVVEVTTESDEQPVSMSELYPLQISPVSSYAESETTDSVPSDEESAEGRPHWRKRNIEGKQYLSNMGTRGSYLLPGMASFVTSNKPDLQVTIKEESNPVPYNSSWPPFQDLPLSSSMTPASSSSRPDRETRASVIKKTSDITQARVKSC.

A DNA-binding region (IRF tryptophan pentad repeat) is located at residues 5 to 113; it reads RMRMRPWLEE…NAFRVYRMLP (109 aa). 2 positions are modified to N6-acetyllysine: Lys-75 and Lys-78. The interval 117-148 is disordered; that stretch reads RPSKKGKKPKTEKEDKVKHIKQEPVESSLGLS. The segment covering 125 to 140 has biased composition (basic and acidic residues); that stretch reads PKTEKEDKVKHIKQEP. Lys-137 participates in a covalent cross-link: Glycyl lysine isopeptide (Lys-Gly) (interchain with G-Cter in SUMO); alternate. Lys-137 participates in a covalent cross-link: Glycyl lysine isopeptide (Lys-Gly) (interchain with G-Cter in SUMO2); alternate. Lys-166 is covalently cross-linked (Glycyl lysine isopeptide (Lys-Gly) (interchain with G-Cter in SUMO)). At Ser-225 the chain carries Phosphoserine. The segment covering 228 to 239 has biased composition (polar residues); it reads SSYAESETTDSV. Positions 228–251 are disordered; that stretch reads SSYAESETTDSVPSDEESAEGRPH. A Glycyl lysine isopeptide (Lys-Gly) (interchain with G-Cter in SUMO2) cross-link involves residue Lys-260. Lys-293 is covalently cross-linked (Glycyl lysine isopeptide (Lys-Gly) (interchain with G-Cter in SUMO)). Residues 297-349 are disordered; it reads NPVPYNSSWPPFQDLPLSSSMTPASSSSRPDRETRASVIKKTSDITQARVKSC. Low complexity predominate over residues 314–324; it reads SSSMTPASSSS.

The protein belongs to the IRF family. As to quaternary structure, interacts with BRD7, IRF2BP1 and IRF2BP2. Interacts with CREBBP in growing cells; the interaction acetylates IRF2 and regulates IRF2-dependent H4 promoter activity. Acetylated by CBP/ p300 during cell-growth. Acetylation on Lys-75 is required for stimulation of H4 promoter activity. In terms of processing, the major sites of sumoylation are Lys-137 and Lys-293. Sumoylation with SUMO1 increases its transcriptional repressor activity on IRF1 and diminishes its ability to activate ISRE and H4 promoter. As to expression, expressed throughout the epithelium of the colon. Also expressed in lamina propria.

The protein localises to the nucleus. Specifically binds to the upstream regulatory region of type I IFN and IFN-inducible MHC class I genes (the interferon consensus sequence (ICS)) and represses those genes. Also acts as an activator for several genes including H4 and IL7. Constitutively binds to the ISRE promoter to activate IL7. Involved in cell cycle regulation through binding the site II (HiNF-M) promoter region of H4 and activating transcription during cell growth. Antagonizes IRF1 transcriptional activation. This Homo sapiens (Human) protein is Interferon regulatory factor 2 (IRF2).